A 140-amino-acid polypeptide reads, in one-letter code: Prepilin peptidase-dependent protein A (140 aa).

A propeptide spanning residues 1 to 23 (MLLLKASAICGKGNEGKRNKKGG) is cleaved from the precursor. The residue at position 24 (Phe-24) is an N-methylphenylalanine. Residues 24–44 (FTLIELTVVLAIMAIILMVIA) traverse the membrane as a helical segment.

It localises to the membrane. Its function is as follows. Not yet known. This Clostridium perfringens (strain 13 / Type A) protein is Prepilin peptidase-dependent protein A (ppdA).